A 53-amino-acid chain; its full sequence is MLRYAVIFFIIAIVAAVFGFGGIAAGAAEIAKILFYIFVVIFLVTLLLGVVRR.

Helical transmembrane passes span 5 to 25 (AVIFFIIAIVAAVFGFGGIAA) and 30 to 50 (IAKILFYIFVVIFLVTLLLGV).

This sequence belongs to the UPF0391 family.

The protein resides in the cell membrane. This chain is UPF0391 membrane protein Bcep18194_C7021, found in Burkholderia lata (strain ATCC 17760 / DSM 23089 / LMG 22485 / NCIMB 9086 / R18194 / 383).